Here is a 119-residue protein sequence, read N- to C-terminus: Large ribosomal subunit protein uL24 (119 aa).

Belongs to the universal ribosomal protein uL24 family. In terms of assembly, part of the 50S ribosomal subunit.

Functionally, one of two assembly initiator proteins, it binds directly to the 5'-end of the 23S rRNA, where it nucleates assembly of the 50S subunit. Located at the polypeptide exit tunnel on the outside of the subunit. This chain is Large ribosomal subunit protein uL24, found in Methanococcus vannielii.